The sequence spans 90 residues: DNA-directed RNA polymerase subunit Rpo11 (90 aa).

It belongs to the archaeal Rpo11/eukaryotic RPB11/RPC19 RNA polymerase subunit family. Part of the 13-subunit RNA polymerase complex.

Its subcellular location is the cytoplasm. It carries out the reaction RNA(n) + a ribonucleoside 5'-triphosphate = RNA(n+1) + diphosphate. DNA-dependent RNA polymerase (RNAP) catalyzes the transcription of DNA into RNA using the four ribonucleoside triphosphates as substrates. The protein is DNA-directed RNA polymerase subunit Rpo11 of Sulfolobus acidocaldarius (strain ATCC 33909 / DSM 639 / JCM 8929 / NBRC 15157 / NCIMB 11770).